We begin with the raw amino-acid sequence, 1057 residues long: Hemophilin receptor (1057 aa).

The TBDR plug domain maps to 168–285 (KVYDANRSSV…VGGAVVVKTL (118 aa)). A TBDR beta-barrel domain is found at 296 to 1057 (SFGAELKVEG…TMKISWTTKF (762 aa)).

The protein belongs to the TonB-dependent receptor family.

It is found in the cell outer membrane. Functionally, part of a high affinity heme acquisition system. Functions as a gateway for heme entry into the bacterial cell, enabling growth on hemoprotein sources. Can acquire heme directly from hemoprotein reservoirs, however, HphA likely enhances the efficiency of this process by delivering heme to HphR. Is essential for virulence, bacterial dissemination and growth in the blood. This is Hemophilin receptor from Acinetobacter baumannii.